The sequence spans 459 residues: uncharacterized protein (459 aa).

Helical transmembrane passes span 53 to 75 and 111 to 133; these read IPLL…GLTL and ARIA…CLCA. Positions 174 to 196 are disordered; sequence HLDNPSAPHPSENPQSRAHPKQN.

It localises to the cell membrane. This is an uncharacterized protein from Treponema pallidum (strain Nichols).